The sequence spans 254 residues: Triosephosphate isomerase (254 aa).

Residue 9-11 participates in substrate binding; that stretch reads NWK. Catalysis depends on His-95, which acts as the Electrophile. Catalysis depends on Glu-167, which acts as the Proton acceptor. Substrate is bound by residues Gly-173, Ser-213, and 234 to 235; that span reads GG.

This sequence belongs to the triosephosphate isomerase family. Homodimer.

The protein resides in the cytoplasm. The catalysed reaction is D-glyceraldehyde 3-phosphate = dihydroxyacetone phosphate. Its pathway is carbohydrate biosynthesis; gluconeogenesis. The protein operates within carbohydrate degradation; glycolysis; D-glyceraldehyde 3-phosphate from glycerone phosphate: step 1/1. In terms of biological role, involved in the gluconeogenesis. Catalyzes stereospecifically the conversion of dihydroxyacetone phosphate (DHAP) to D-glyceraldehyde-3-phosphate (G3P). The polypeptide is Triosephosphate isomerase (Roseiflexus castenholzii (strain DSM 13941 / HLO8)).